Here is a 370-residue protein sequence, read N- to C-terminus: Protein rough sheath 2 (370 aa).

HTH myb-type domains are found at residues 1-53 and 54-108; these read MKER…KNYL and RPGI…EKQQ. 2 consecutive DNA-binding regions (H-T-H motif) follow at residues 27–53 and 81–104; these read WHLV…KNYL and WKKI…EVFK. The disordered stretch occupies residues 107–129; that stretch reads QQRELRDSRRPPPEPSPDERGRY. The stretch at 276-340 forms a coiled coil; sequence KRVEQQLEME…QVKEEKMAEQ (65 aa).

Homodimer. Interacts with AS2, WRKY1, HIRA, a probable histone chaperone, and RIK, a predicted RNA binding protein. As to expression, expressed in lateral organ promordia.

The protein localises to the nucleus. Its function is as follows. Transcription factor required for normal cell differentiation. Interacts directly with asymmetric leaves 2 (AS2) to repress the knox homeobox genes. In Zea mays (Maize), this protein is Protein rough sheath 2 (RS2).